Here is a 359-residue protein sequence, read N- to C-terminus: 3-isopropylmalate dehydrogenase (359 aa).

Residues R97, R107, R135, and D224 each coordinate substrate. Residues D224, D248, and D252 each contribute to the Mg(2+) site. 282–294 (GSAPDIAGKDIAN) contributes to the NAD(+) binding site.

The protein belongs to the isocitrate and isopropylmalate dehydrogenases family. LeuB type 1 subfamily. As to quaternary structure, homodimer. Mg(2+) is required as a cofactor. Requires Mn(2+) as cofactor.

It localises to the cytoplasm. It catalyses the reaction (2R,3S)-3-isopropylmalate + NAD(+) = 4-methyl-2-oxopentanoate + CO2 + NADH. It participates in amino-acid biosynthesis; L-leucine biosynthesis; L-leucine from 3-methyl-2-oxobutanoate: step 3/4. Its function is as follows. Catalyzes the oxidation of 3-carboxy-2-hydroxy-4-methylpentanoate (3-isopropylmalate) to 3-carboxy-4-methyl-2-oxopentanoate. The product decarboxylates to 4-methyl-2 oxopentanoate. The sequence is that of 3-isopropylmalate dehydrogenase from Prochlorococcus marinus (strain NATL2A).